Reading from the N-terminus, the 224-residue chain is Phosphoglycolate phosphatase (224 aa).

Residue aspartate 8 is the Nucleophile of the active site. Positions 8 and 10 each coordinate Mg(2+). Lysine 151 provides a ligand contact to substrate. The Mg(2+) site is built by aspartate 174 and aspartate 178.

Belongs to the archaeal SPP-like hydrolase family. The cofactor is Mg(2+).

The catalysed reaction is 2-phosphoglycolate + H2O = glycolate + phosphate. In terms of biological role, catalyzes the dephosphorylation of 2-phosphoglycolate. The sequence is that of Phosphoglycolate phosphatase from Thermoplasma volcanium (strain ATCC 51530 / DSM 4299 / JCM 9571 / NBRC 15438 / GSS1).